We begin with the raw amino-acid sequence, 424 residues long: Serine hydroxymethyltransferase (424 aa).

(6S)-5,6,7,8-tetrahydrofolate contacts are provided by residues leucine 126 and 130 to 132; that span reads GHL. N6-(pyridoxal phosphate)lysine is present on lysine 235. 359 to 361 provides a ligand contact to (6S)-5,6,7,8-tetrahydrofolate; the sequence is SPF.

This sequence belongs to the SHMT family. Homodimer. It depends on pyridoxal 5'-phosphate as a cofactor.

It localises to the cytoplasm. The enzyme catalyses (6R)-5,10-methylene-5,6,7,8-tetrahydrofolate + glycine + H2O = (6S)-5,6,7,8-tetrahydrofolate + L-serine. Its pathway is one-carbon metabolism; tetrahydrofolate interconversion. The protein operates within amino-acid biosynthesis; glycine biosynthesis; glycine from L-serine: step 1/1. In terms of biological role, catalyzes the reversible interconversion of serine and glycine with tetrahydrofolate (THF) serving as the one-carbon carrier. This reaction serves as the major source of one-carbon groups required for the biosynthesis of purines, thymidylate, methionine, and other important biomolecules. Also exhibits THF-independent aldolase activity toward beta-hydroxyamino acids, producing glycine and aldehydes, via a retro-aldol mechanism. This chain is Serine hydroxymethyltransferase, found in Prochlorococcus marinus (strain MIT 9303).